Here is a 499-residue protein sequence, read N- to C-terminus: ATP synthase subunit beta, chloroplastic (499 aa).

170–177 (GGAGVGKT) is an ATP binding site.

It belongs to the ATPase alpha/beta chains family. In terms of assembly, F-type ATPases have 2 components, CF(1) - the catalytic core - and CF(0) - the membrane proton channel. CF(1) has five subunits: alpha(3), beta(3), gamma(1), delta(1), epsilon(1). CF(0) has four main subunits: a(1), b(1), b'(1) and c(9-12).

It is found in the plastid. It localises to the chloroplast thylakoid membrane. It catalyses the reaction ATP + H2O + 4 H(+)(in) = ADP + phosphate + 5 H(+)(out). In terms of biological role, produces ATP from ADP in the presence of a proton gradient across the membrane. The catalytic sites are hosted primarily by the beta subunits. The protein is ATP synthase subunit beta, chloroplastic of Ipomoea purpurea (Common morning glory).